The following is a 198-amino-acid chain: Probable host range protein 2-3 (198 aa).

Positions 153–198 (GENGYEDSTEEEDNEEDTDGVCLYCLEEEEEEDEDEDEDEDEDEEE) are disordered. Acidic residues-rich tracts occupy residues 156–171 (GYED…EDTD) and 178–198 (LEEE…DEEE).

The protein belongs to the poxviridae C7 protein family.

In terms of biological role, plays a role for multiplication of the virus in different cell types. The polypeptide is Probable host range protein 2-3 (Rabbit fibroma virus (strain Kasza) (RFV)).